The chain runs to 632 residues: tRNA endonuclease VMS1 (632 aa).

The segment at Met-72–His-96 adopts a C2H2-type zinc-finger fold. Residues His-123–Gln-155 are disordered. Positions Pro-232–Leu-392 constitute a VLRF1 domain. Gln-295 is an active-site residue. ANK repeat units lie at residues Leu-470–Ile-500 and Leu-504–Glu-530. Coiled-coil stretches lie at residues Leu-544–Ala-582 and Thr-608–Tyr-632. The span at Lys-578–Pro-589 shows a compositional bias: basic and acidic residues. The segment at Lys-578 to Tyr-632 is disordered. Residues Asn-595–Thr-608 show a composition bias toward polar residues. Over residues Asp-609–Tyr-632 the composition is skewed to basic and acidic residues.

The protein belongs to the ANKZF1/VMS1 family. In terms of assembly, associates with 60S ribosomal subunit. Interacts with CDC48. Interacts with NPL4.

The protein localises to the cytoplasm. Its subcellular location is the mitochondrion. The protein resides in the endoplasmic reticulum membrane. In terms of biological role, endonuclease that cleaves polypeptidyl-tRNAs downstream of the ribosome-associated quality control (RQC) pathway to release incompletely synthesized polypeptides for degradation. The RQC pathway disassembles aberrantly stalled translation complexes to recycle or degrade the constituent parts. VMS1 acts downstream disassembly of stalled ribosomes and specifically cleaves off the terminal 3'-CCA nucleotides universal to all tRNAs from polypeptidyl-tRNAs, releasing (1) ubiquitinated polypeptides from 60S ribosomal subunit for degradation by the ERAD pathway and (2) cleaved tRNAs for recycling. Component of an evolutionarily conserved system for ubiquitin-mediated mitochondria-associated protein degradation (MAD), which is necessary to maintain mitochondrial, cellular, and organismal viability. The chain is tRNA endonuclease VMS1 from Saccharomyces cerevisiae (strain ATCC 204508 / S288c) (Baker's yeast).